We begin with the raw amino-acid sequence, 63 residues long: Large ribosomal subunit protein uL29 (63 aa).

Belongs to the universal ribosomal protein uL29 family.

This chain is Large ribosomal subunit protein uL29, found in Neisseria meningitidis serogroup C (strain 053442).